Here is a 59-residue protein sequence, read N- to C-terminus: Large ribosomal subunit protein uL30 (59 aa).

It belongs to the universal ribosomal protein uL30 family. In terms of assembly, part of the 50S ribosomal subunit.

In Clostridium kluyveri (strain ATCC 8527 / DSM 555 / NBRC 12016 / NCIMB 10680 / K1), this protein is Large ribosomal subunit protein uL30.